We begin with the raw amino-acid sequence, 289 residues long: 4-diphosphocytidyl-2-C-methyl-D-erythritol kinase (289 aa).

Lysine 10 is an active-site residue. Residue 94 to 104 (PVAAGLAGGSS) participates in ATP binding. Aspartate 136 is an active-site residue.

Belongs to the GHMP kinase family. IspE subfamily.

The catalysed reaction is 4-CDP-2-C-methyl-D-erythritol + ATP = 4-CDP-2-C-methyl-D-erythritol 2-phosphate + ADP + H(+). It participates in isoprenoid biosynthesis; isopentenyl diphosphate biosynthesis via DXP pathway; isopentenyl diphosphate from 1-deoxy-D-xylulose 5-phosphate: step 3/6. Functionally, catalyzes the phosphorylation of the position 2 hydroxy group of 4-diphosphocytidyl-2C-methyl-D-erythritol. The chain is 4-diphosphocytidyl-2-C-methyl-D-erythritol kinase from Bacillus velezensis (strain DSM 23117 / BGSC 10A6 / LMG 26770 / FZB42) (Bacillus amyloliquefaciens subsp. plantarum).